The sequence spans 274 residues: Momilactone A synthase (274 aa).

The protein belongs to the short-chain dehydrogenases/reductases (SDR) family.

It carries out the reaction 3beta-hydroxy-9beta-pimara-7,15-dien-19,6beta-olide + NAD(+) = momilactone A + NADH + H(+). It catalyses the reaction 3beta-hydroxy-9beta-pimara-7,15-dien-19,6beta-olide + NADP(+) = momilactone A + NADPH + H(+). Its function is as follows. Involved in momilactone phytoalexins biosynthesis. Catalyzes the last step of momilactone A biosynthesis. The polypeptide is Momilactone A synthase (Oryza sativa subsp. japonica (Rice)).